We begin with the raw amino-acid sequence, 443 residues long: ATP-dependent protease ATPase subunit HslU (443 aa).

Residues Ile-18, 60-65, Asp-256, Glu-321, and Arg-393 each bind ATP; that span reads GVGKTE.

This sequence belongs to the ClpX chaperone family. HslU subfamily. In terms of assembly, a double ring-shaped homohexamer of HslV is capped on each side by a ring-shaped HslU homohexamer. The assembly of the HslU/HslV complex is dependent on binding of ATP.

The protein localises to the cytoplasm. Its function is as follows. ATPase subunit of a proteasome-like degradation complex; this subunit has chaperone activity. The binding of ATP and its subsequent hydrolysis by HslU are essential for unfolding of protein substrates subsequently hydrolyzed by HslV. HslU recognizes the N-terminal part of its protein substrates and unfolds these before they are guided to HslV for hydrolysis. This chain is ATP-dependent protease ATPase subunit HslU, found in Escherichia coli O139:H28 (strain E24377A / ETEC).